The chain runs to 205 residues: Protein PAXX (205 aa).

In terms of domain architecture, PISA spans 39 to 81 (FNLYVTDAAELWSTCFSPDSLARLKARFGLSGAEDIHSRFRAA). At Thr147 the chain carries Phosphothreonine. A compositionally biased stretch (polar residues) spans 147 to 159 (TITSPKKNTQPAG). Positions 147–205 (TITSPKKNTQPAGTQFLPELDHQRGSSGPGVRRRCPGESLINPGFKSKKPAAGVDFDET) are disordered. Ser150 is modified (phosphoserine). Positions 172–205 (SSGPGVRRRCPGESLINPGFKSKKPAAGVDFDET) are mediates interaction with XRCC5/Ku80 and XRCC6/Ku70 and association with the non-homologous end joining core complex. The XLM signature appears at 191–205 (FKSKKPAAGVDFDET).

The protein belongs to the XRCC4-XLF family. PAXX subfamily. Homodimer. Interacts with the DNA-bound XRCC5/Ku80 and XRCC6/Ku70 heterodimer (Ku complex); the interaction is direct. Associated component of the non-homologous end joining (NHEJ) complex, composed of the core proteins PRKDC, LIG4, XRCC4, XRCC6/Ku70, XRCC5/Ku86 and NHEJ1/XLF. Interacts with POLL (DNA polymerase lambda); promoting POLL recruitment to double-strand breaks (DSBs) and stimulation of the end-filling activity of POLL. In terms of processing, phosphorylation may inhibit interaction with the DNA-bound XRCC5/Ku80 and XRCC6/Ku70 heterodimer (Ku complex).

It localises to the nucleus. The protein resides in the chromosome. In terms of biological role, non-essential DNA repair protein involved in DNA non-homologous end joining (NHEJ); participates in double-strand break (DSB) repair and V(D)J recombination. May act as a scaffold required for accumulation of the Ku heterodimer, composed of XRCC5/Ku80 and XRCC6/Ku70, at double-strand break sites and promote the assembly and/or stability of the NHEJ machinery. Involved in NHEJ by promoting the ligation of blunt-ended DNA ends. Together with NHEJ1/XLF, collaborates with DNA polymerase lambda (POLL) to promote joining of non-cohesive DNA ends. Constitutes a non-essential component of classical NHEJ: has a complementary but distinct function with NHEJ1/XLF in DNA repair. The sequence is that of Protein PAXX from Mus musculus (Mouse).